Here is a 313-residue protein sequence, read N- to C-terminus: tRNA-cytidine(32) 2-sulfurtransferase (313 aa).

A PP-loop motif motif is present at residues 50 to 55 (SGGKDS). Residues Cys125, Cys128, and Cys216 each coordinate [4Fe-4S] cluster.

This sequence belongs to the TtcA family. In terms of assembly, homodimer. Mg(2+) serves as cofactor. The cofactor is [4Fe-4S] cluster.

It is found in the cytoplasm. It carries out the reaction cytidine(32) in tRNA + S-sulfanyl-L-cysteinyl-[cysteine desulfurase] + AH2 + ATP = 2-thiocytidine(32) in tRNA + L-cysteinyl-[cysteine desulfurase] + A + AMP + diphosphate + H(+). The protein operates within tRNA modification. Its function is as follows. Catalyzes the ATP-dependent 2-thiolation of cytidine in position 32 of tRNA, to form 2-thiocytidine (s(2)C32). The sulfur atoms are provided by the cysteine/cysteine desulfurase (IscS) system. The chain is tRNA-cytidine(32) 2-sulfurtransferase from Haemophilus influenzae (strain ATCC 51907 / DSM 11121 / KW20 / Rd).